A 617-amino-acid polypeptide reads, in one-letter code: Elongation factor 4 (617 aa).

The tr-type G domain maps to 17 to 198; sequence AIIRNFCIIA…KIVRDLPAPV (182 aa). Residues 29-34 and 145-148 each bind GTP; these read DHGKST and NKID.

This sequence belongs to the TRAFAC class translation factor GTPase superfamily. Classic translation factor GTPase family. LepA subfamily.

The protein localises to the cell membrane. It catalyses the reaction GTP + H2O = GDP + phosphate + H(+). Required for accurate and efficient protein synthesis under certain stress conditions. May act as a fidelity factor of the translation reaction, by catalyzing a one-codon backward translocation of tRNAs on improperly translocated ribosomes. Back-translocation proceeds from a post-translocation (POST) complex to a pre-translocation (PRE) complex, thus giving elongation factor G a second chance to translocate the tRNAs correctly. Binds to ribosomes in a GTP-dependent manner. This Arthrobacter sp. (strain FB24) protein is Elongation factor 4.